The following is a 514-amino-acid chain: Serine--tRNA ligase, cytoplasmic (514 aa).

Position 1 is an N-acetylmethionine (Met1). Residues 9-61 are interaction with tRNA; it reads RVDKGGDPALIRETQEKRFKDPGLVDQLVKADSEWRRCRFRADNLNKLKNLCS. A Phosphoserine modification is found at Ser241. Residues Thr271 and Arg302 each contribute to the L-serine site. Residues 302 to 304 and 318 to 321 contribute to the ATP site; these read RQE and VHQF. At Lys323 the chain carries N6-acetyllysine. Glu325 lines the L-serine pocket. 391-394 contacts ATP; sequence ELVS. Asn427 is an L-serine binding site. A disordered region spans residues 471 to 514; that stretch reads VKPAPIDQEPSKKQKKQHEGSKKKAAARDVALESRLQNMEVTDA. A compositionally biased stretch (basic and acidic residues) spans 479–502; the sequence is EPSKKQKKQHEGSKKKAAARDVAL. The Nuclear localization signal signature appears at 482–494; it reads KKQKKQHEGSKKK. Over residues 505–514 the composition is skewed to polar residues; that stretch reads RLQNMEVTDA.

Belongs to the class-II aminoacyl-tRNA synthetase family. Type-1 seryl-tRNA synthetase subfamily. In terms of assembly, homodimer. The tRNA molecule may bind across the dimer. Interacts with SIRT2. Interacts with METTL6; interaction is required for the tRNA N(3)-methylcytidine methyltransferase activity of METTL6.

Its subcellular location is the cytoplasm. It localises to the nucleus. The enzyme catalyses tRNA(Ser) + L-serine + ATP = L-seryl-tRNA(Ser) + AMP + diphosphate + H(+). It catalyses the reaction tRNA(Sec) + L-serine + ATP = L-seryl-tRNA(Sec) + AMP + diphosphate + H(+). The protein operates within aminoacyl-tRNA biosynthesis; selenocysteinyl-tRNA(Sec) biosynthesis; L-seryl-tRNA(Sec) from L-serine and tRNA(Sec): step 1/1. Functionally, catalyzes the attachment of serine to tRNA(Ser) in a two-step reaction: serine is first activated by ATP to form Ser-AMP and then transferred to the acceptor end of tRNA(Ser). Is probably also able to aminoacylate tRNA(Sec) with serine, to form the misacylated tRNA L-seryl-tRNA(Sec), which will be further converted into selenocysteinyl-tRNA(Sec). In the nucleus, binds to the VEGFA core promoter and prevents MYC binding and transcriptional activation by MYC. Recruits SIRT2 to the VEGFA promoter, promoting deacetylation of histone H4 at 'Lys-16' (H4K16). Thereby, inhibits the production of VEGFA and sprouting angiogenesis mediated by VEGFA. The sequence is that of Serine--tRNA ligase, cytoplasmic (SARS1) from Macaca fascicularis (Crab-eating macaque).